The chain runs to 414 residues: Nuclear pore complex-interacting protein family member B7 (414 aa).

The first 18 residues, 1-18, serve as a signal peptide directing secretion; it reads MRLRFWLLIWLLLGFISH. Asparagine 111 carries N-linked (GlcNAc...) asparagine glycosylation. Disordered regions lie at residues 242-262 and 335-402; these read RMGRQPPPPTQQHSITDNSLS and SPLP…LRTR. A compositionally biased stretch (polar residues) spans 252–262; that stretch reads QQHSITDNSLS. The segment covering 356–384 has biased composition (basic and acidic residues); sequence EVEKPPKPKRWRVDEVEQSPKPKRQREAE. The segment covering 390–402 has biased composition (basic residues); sequence KPKRRRLSKLRTR.

Belongs to the NPIP family.

It localises to the secreted. This is Nuclear pore complex-interacting protein family member B7 (NPIPB7) from Homo sapiens (Human).